A 324-amino-acid chain; its full sequence is Putative divalent cation/proton antiporter TMEM165 (324 aa).

An N-terminal signal peptide occupies residues 1–33; it reads MAAAAPGNGRASAPRLLLLFLVPLLWAPAAVRA. Residues 34-89 are Lumenal-facing; that stretch reads GPDEDLSHRNKEPPAPAQQLQPQPVAVQGPEPARVEKIFTPAAPVHTNKEDPATQT. A compositionally biased stretch (basic and acidic residues) spans 35–45; that stretch reads PDEDLSHRNKE. The segment at 35–59 is disordered; it reads PDEDLSHRNKEPPAPAQQLQPQPVA. Positions 50–59 are enriched in low complexity; sequence AQQLQPQPVA. A helical membrane pass occupies residues 90–110; the sequence is NLGFIHAFVAAISVIIVSELG. Topologically, residues 111–126 are cytoplasmic; it reads DKTFFIAAIMAMRYNR. Residues 127 to 147 form a helical membrane-spanning segment; the sequence is LTVLAGAMLALGLMTCLSVLF. The Lumenal segment spans residues 148 to 151; that stretch reads GYAT. The helical transmembrane segment at 152–172 threads the bilayer; that stretch reads TVIPRVYTYYVSTVLFAIFGI. Residues 173-228 lie on the Cytoplasmic side of the membrane; the sequence is RMLREGLKMSPDEGQEELEEVQAELKKKDEEFQRTKLLNGPGDVETGTSITVPQKK. Residues 184–211 adopt a coiled-coil conformation; the sequence is DEGQEELEEVQAELKKKDEEFQRTKLLN. The chain crosses the membrane as a helical span at residues 229 to 249; that stretch reads WLHFISPIFVQALTLTFLAEW. Residues 250 to 267 are Lumenal-facing; the sequence is GDRSQLTTIVLAAREDPY. A helical transmembrane segment spans residues 268-288; the sequence is GVAVGGTVGHCLCTGLAVIGG. The Cytoplasmic segment spans residues 289 to 299; it reads RMIAQKISVRT. The helical transmembrane segment at 300-320 threads the bilayer; sequence VTIIGGIVFLAFAFSALFISP. The Lumenal portion of the chain corresponds to 321 to 324; it reads DSGF.

It belongs to the GDT1 family. In terms of tissue distribution, ubiquitously expressed.

The protein resides in the golgi apparatus membrane. The catalysed reaction is Ca(2+)(in) + n H(+)(out) = Ca(2+)(out) + n H(+)(in). The enzyme catalyses Mn(2+)(in) + n H(+)(out) = Mn(2+)(out) + n H(+)(in). Its function is as follows. Putative divalent cation:proton antiporter that exchanges calcium or manganese ions for protons across the Golgi membrane. Mediates the reversible transport of calcium or manganese to the Golgi lumen driven by the proton gradient and possibly the membrane potential generated by V-ATPase. Provides calcium or manganese cofactors to resident Golgi enzymes and contributes to the maintenance of an acidic luminal Golgi pH required for proper functioning of the secretory pathway. Promotes Ca(2+) storage within the Golgi lumen of the mammary epithelial cells to be then secreted into milk. The transport mechanism and stoichiometry remains to be elucidated. This chain is Putative divalent cation/proton antiporter TMEM165, found in Homo sapiens (Human).